Consider the following 121-residue polypeptide: Phosphoribosyl-ATP pyrophosphatase (121 aa).

It belongs to the PRA-PH family.

Its subcellular location is the cytoplasm. The enzyme catalyses 1-(5-phospho-beta-D-ribosyl)-ATP + H2O = 1-(5-phospho-beta-D-ribosyl)-5'-AMP + diphosphate + H(+). Its pathway is amino-acid biosynthesis; L-histidine biosynthesis; L-histidine from 5-phospho-alpha-D-ribose 1-diphosphate: step 2/9. The protein is Phosphoribosyl-ATP pyrophosphatase of Burkholderia ambifaria (strain MC40-6).